The primary structure comprises 329 residues: Glucokinase (329 aa).

13–18 (GDIGGT) contributes to the ATP binding site.

The protein belongs to the bacterial glucokinase family.

The protein resides in the cytoplasm. It carries out the reaction D-glucose + ATP = D-glucose 6-phosphate + ADP + H(+). This chain is Glucokinase, found in Caulobacter sp. (strain K31).